Here is a 153-residue protein sequence, read N- to C-terminus: NAD(P)H-quinone oxidoreductase subunit N (153 aa).

This sequence belongs to the complex I NdhN subunit family. NDH-1 can be composed of about 15 different subunits; different subcomplexes with different compositions have been identified which probably have different functions.

Its subcellular location is the cellular thylakoid membrane. It catalyses the reaction a plastoquinone + NADH + (n+1) H(+)(in) = a plastoquinol + NAD(+) + n H(+)(out). It carries out the reaction a plastoquinone + NADPH + (n+1) H(+)(in) = a plastoquinol + NADP(+) + n H(+)(out). Functionally, NDH-1 shuttles electrons from an unknown electron donor, via FMN and iron-sulfur (Fe-S) centers, to quinones in the respiratory and/or the photosynthetic chain. The immediate electron acceptor for the enzyme in this species is believed to be plastoquinone. Couples the redox reaction to proton translocation, and thus conserves the redox energy in a proton gradient. Cyanobacterial NDH-1 also plays a role in inorganic carbon-concentration. The sequence is that of NAD(P)H-quinone oxidoreductase subunit N from Parasynechococcus marenigrum (strain WH8102).